The sequence spans 192 residues: Elongation factor P (192 aa).

It belongs to the elongation factor P family.

It is found in the cytoplasm. It participates in protein biosynthesis; polypeptide chain elongation. Functionally, involved in peptide bond synthesis. Stimulates efficient translation and peptide-bond synthesis on native or reconstituted 70S ribosomes in vitro. Probably functions indirectly by altering the affinity of the ribosome for aminoacyl-tRNA, thus increasing their reactivity as acceptors for peptidyl transferase. This is Elongation factor P from Borrelia duttonii (strain Ly).